Reading from the N-terminus, the 346-residue chain is Cyclin-dependent kinase 20 (346 aa).

The Protein kinase domain occupies Tyr4 to Phe288. ATP is bound by residues Ile10–Val18 and Lys33. Asp127 acts as the Proton acceptor in catalysis.

Belongs to the protein kinase superfamily. CMGC Ser/Thr protein kinase family. CDC2/CDKX subfamily. As to quaternary structure, monomer. Interacts with TBC1D32. Interacts with MAK.

The protein resides in the nucleus. The protein localises to the cytoplasm. It is found in the cell projection. It localises to the cilium. The enzyme catalyses L-seryl-[protein] + ATP = O-phospho-L-seryl-[protein] + ADP + H(+). It catalyses the reaction L-threonyl-[protein] + ATP = O-phospho-L-threonyl-[protein] + ADP + H(+). In terms of biological role, required for high-level Shh responses in the developing neural tube. Together with TBC1D32, controls the structure of the primary cilium by coordinating assembly of the ciliary membrane and axoneme, allowing GLI2 to be properly activated in response to SHH signaling. Involved in cell growth. Activates CDK2, a kinase involved in the control of the cell cycle, by phosphorylating residue 'Thr-160'. The protein is Cyclin-dependent kinase 20 (CDK20) of Homo sapiens (Human).